We begin with the raw amino-acid sequence, 149 residues long: Transcriptional repressor NrdR (149 aa).

Residues 3-34 fold into a zinc finger; the sequence is CPFCSATDTKVIDSRLVADGHQVRRRRECAEC. Positions 49 to 139 constitute an ATP-cone domain; sequence PRVVKQDGSR…VYRAFEDVSE (91 aa).

This sequence belongs to the NrdR family. Zn(2+) serves as cofactor.

Functionally, negatively regulates transcription of bacterial ribonucleotide reductase nrd genes and operons by binding to NrdR-boxes. This Shewanella sediminis (strain HAW-EB3) protein is Transcriptional repressor NrdR.